The chain runs to 125 residues: Testis-specific protein LINC02914 (125 aa).

A compositionally biased stretch (basic and acidic residues) spans 1–12 (MHRKEPGARLEA). Residues 1–45 (MHRKEPGARLEATRGAARPHKQGTKPMITRPSVSQLGEGKCPSSQ) form a disordered region.

Expressed in testes and ejaculated spermatozoa (at protein level).

It is found in the cytoplasm. It localises to the nucleus. The protein localises to the cell projection. Its subcellular location is the cilium. The protein resides in the flagellum. In terms of biological role, may play a role in the flagellum biology. This Homo sapiens (Human) protein is Testis-specific protein LINC02914.